The chain runs to 947 residues: Regulator of spindle assembly protein 2 (947 aa).

2 disordered regions span residues 20–148 (EKPA…LSEQ) and 173–211 (SPHEARQQTIQESSEQLEPRAKVTRSSSQPPPIDTLKPR). Composition is skewed to basic and acidic residues over residues 30 to 50 (PKYRDHHEKIRNKENMEEGEK) and 62 to 84 (TREDYERYDEDRRLKDKARDLRI). Composition is skewed to polar residues over residues 90-102 (SATPEASPSSDQY) and 179-188 (QQTIQESSEQ). Residues 276 to 320 (IIAEEAKKRRNEAEAVRKLIEVETQNAKKRAVIQELKDRIDKLTQ) are a coiled coil. Disordered stretches follow at residues 407–453 (KINP…RRIG), 575–594 (ERESMEAQESESESMELEIP), 600–662 (SVTT…GLII), and 681–705 (EQSLEEELEPRGNNDSADDSGFLLD). The span at 411-422 (SSQLNQQSSSDA) shows a compositional bias: low complexity. A compositionally biased stretch (polar residues) spans 430 to 449 (EASTQMTSRLAESAMTQTSP). Residues 563-591 (AGLSHYLEQVKKERESMEAQESESESMEL) adopt a coiled-coil conformation. The span at 580–590 (EAQESESESME) shows a compositional bias: acidic residues. Over residues 645 to 657 (FEHEIEEHKEPEK) the composition is skewed to basic and acidic residues.

As to quaternary structure, interacts with phosphatase regulatory subunit rsa-1 and tpxl-1. May interact with spd-5. May interact with sys-1.

The protein localises to the cytoplasm. It is found in the cytoskeleton. Its subcellular location is the microtubule organizing center. The protein resides in the centrosome. Recruits rsa-1 and, thereby, phosphatase let-92/paa-1 complex to the centrosomes. Recruits sys-1/beta-catenin to mitotic centrosomes during the first embryonic cell divisions. The sequence is that of Regulator of spindle assembly protein 2 from Caenorhabditis elegans.